A 264-amino-acid polypeptide reads, in one-letter code: Small ribosomal subunit protein eS1B (264 aa).

Basic residues predominate over residues 1–19 (MALGKNKRISKGGKRGKRG). The segment at 1–23 (MALGKNKRISKGGKRGKRGKAQE) is disordered.

The protein belongs to the eukaryotic ribosomal protein eS1 family. Component of the small ribosomal subunit. Mature ribosomes consist of a small (40S) and a large (60S) subunit. The 40S subunit contains about 33 different proteins and 1 molecule of RNA (18S). The 60S subunit contains about 49 different proteins and 3 molecules of RNA (25S, 5.8S and 5S).

It localises to the cytoplasm. This Leishmania infantum protein is Small ribosomal subunit protein eS1B.